We begin with the raw amino-acid sequence, 580 residues long: Putative adenine deaminase YerA (580 aa).

The residue at position 399 (Ser-399) is a Phosphoserine.

This sequence belongs to the metallo-dependent hydrolases superfamily. Adenine deaminase family.

The enzyme catalyses adenine + H2O + H(+) = hypoxanthine + NH4(+). In Bacillus subtilis (strain 168), this protein is Putative adenine deaminase YerA (yerA).